The primary structure comprises 85 residues: Sec-independent protein translocase protein TatA (85 aa).

A helical transmembrane segment spans residues 1 to 21 (MAGLQGWQLVIIILLAILLFA). The interval 43 to 85 (VKQMRTEGKDAKDERSGTGSTAADEPVEGRVVDRDETDPRDQR) is disordered. Composition is skewed to basic and acidic residues over residues 44 to 58 (KQMRTEGKDAKDERS) and 69 to 85 (VEGRVVDRDETDPRDQR).

The protein belongs to the TatA/E family. As to quaternary structure, the Tat system comprises two distinct complexes: a TatABC complex, containing multiple copies of TatA, TatB and TatC subunits, and a separate TatA complex, containing only TatA subunits. Substrates initially bind to the TatABC complex, which probably triggers association of the separate TatA complex to form the active translocon.

It localises to the cell membrane. In terms of biological role, part of the twin-arginine translocation (Tat) system that transports large folded proteins containing a characteristic twin-arginine motif in their signal peptide across membranes. TatA could form the protein-conducting channel of the Tat system. This Micrococcus luteus (strain ATCC 4698 / DSM 20030 / JCM 1464 / CCM 169 / CCUG 5858 / IAM 1056 / NBRC 3333 / NCIMB 9278 / NCTC 2665 / VKM Ac-2230) (Micrococcus lysodeikticus) protein is Sec-independent protein translocase protein TatA.